A 196-amino-acid polypeptide reads, in one-letter code: Putative NADH dehydrogenase/NAD(P)H nitroreductase Smal_0358 (196 aa).

The protein belongs to the nitroreductase family. HadB/RutE subfamily. Requires FMN as cofactor.

The chain is Putative NADH dehydrogenase/NAD(P)H nitroreductase Smal_0358 from Stenotrophomonas maltophilia (strain R551-3).